A 153-amino-acid polypeptide reads, in one-letter code: Ribosome maturation factor RimP (153 aa).

Belongs to the RimP family.

It localises to the cytoplasm. Functionally, required for maturation of 30S ribosomal subunits. This is Ribosome maturation factor RimP from Chromohalobacter salexigens (strain ATCC BAA-138 / DSM 3043 / CIP 106854 / NCIMB 13768 / 1H11).